The chain runs to 62 residues: TRZGVREDPSVRAIVISVGSGATKDKVGSTGAAAKALVERENPRVRAWVTERGIVARPPTIG.

Belongs to the protease inhibitor I13 (potato type I serine protease inhibitor) family.

The sequence is that of Trypsin inhibitor MCI-3 from Momordica charantia (Bitter gourd).